The chain runs to 193 residues: Thymidine kinase (193 aa).

ATP is bound by residues 16–23 (GPMFSGKS) and 89–92 (DEIQ). Catalysis depends on glutamate 90, which acts as the Proton acceptor. 4 residues coordinate Zn(2+): cysteine 146, cysteine 149, cysteine 184, and cysteine 187.

The protein belongs to the thymidine kinase family. In terms of assembly, homotetramer.

Its subcellular location is the cytoplasm. The catalysed reaction is thymidine + ATP = dTMP + ADP + H(+). This Caldanaerobacter subterraneus subsp. tengcongensis (strain DSM 15242 / JCM 11007 / NBRC 100824 / MB4) (Thermoanaerobacter tengcongensis) protein is Thymidine kinase.